A 551-amino-acid polypeptide reads, in one-letter code: Glucans biosynthesis protein D (551 aa).

Positions 1–32 (MDRRRFIKGSMAMAAVCGTSGIASLFSQAAFA) form a signal peptide, tat-type signal.

Belongs to the OpgD/OpgG family. In terms of processing, predicted to be exported by the Tat system. The position of the signal peptide cleavage has not been experimentally proven.

The protein resides in the periplasm. The protein operates within glycan metabolism; osmoregulated periplasmic glucan (OPG) biosynthesis. In terms of biological role, probably involved in the control of the structural glucose backbone of osmoregulated periplasmic glucans (OPGs). The polypeptide is Glucans biosynthesis protein D (Shigella dysenteriae serotype 1 (strain Sd197)).